Reading from the N-terminus, the 342-residue chain is Protein-glutamate methylesterase/protein-glutamine glutaminase 4 (342 aa).

Residues 2–119 (NIGIVNDLPL…GGSADPSQPL (118 aa)) enclose the Response regulatory domain. D53 bears the 4-aspartylphosphate mark. Residues 144–337 (PAPQGALPPL…DQLISLVQRN (194 aa)) enclose the CheB-type methylesterase domain. Residues S159, H186, and D279 contribute to the active site.

Belongs to the CheB family. Phosphorylated by CheA. Phosphorylation of the N-terminal regulatory domain activates the methylesterase activity.

The protein resides in the cytoplasm. The catalysed reaction is [protein]-L-glutamate 5-O-methyl ester + H2O = L-glutamyl-[protein] + methanol + H(+). It carries out the reaction L-glutaminyl-[protein] + H2O = L-glutamyl-[protein] + NH4(+). Functionally, involved in chemotaxis. Part of a chemotaxis signal transduction system that modulates chemotaxis in response to various stimuli. Catalyzes the demethylation of specific methylglutamate residues introduced into the chemoreceptors (methyl-accepting chemotaxis proteins or MCP) by CheR. Also mediates the irreversible deamidation of specific glutamine residues to glutamic acid. In Burkholderia thailandensis (strain ATCC 700388 / DSM 13276 / CCUG 48851 / CIP 106301 / E264), this protein is Protein-glutamate methylesterase/protein-glutamine glutaminase 4.